Consider the following 252-residue polypeptide: Zinc import ATP-binding protein ZnuC (252 aa).

Residues 5–220 (VTLNKISVTF…PEFIAMFGQR (216 aa)) form the ABC transporter domain. 37-44 (GPNGAGKS) contacts ATP.

This sequence belongs to the ABC transporter superfamily. Zinc importer (TC 3.A.1.15.5) family. As to quaternary structure, the complex is composed of two ATP-binding proteins (ZnuC), two transmembrane proteins (ZnuB) and a solute-binding protein (ZnuA).

The protein localises to the cell inner membrane. The enzyme catalyses Zn(2+)(out) + ATP(in) + H2O(in) = Zn(2+)(in) + ADP(in) + phosphate(in) + H(+)(in). Its function is as follows. Part of the ABC transporter complex ZnuABC involved in zinc import. Responsible for energy coupling to the transport system. The polypeptide is Zinc import ATP-binding protein ZnuC (Yersinia enterocolitica serotype O:8 / biotype 1B (strain NCTC 13174 / 8081)).